Here is a 423-residue protein sequence, read N- to C-terminus: Putative competence-damage inducible protein (423 aa).

This sequence belongs to the CinA family.

This Streptococcus thermophilus (strain ATCC BAA-491 / LMD-9) protein is Putative competence-damage inducible protein.